A 306-amino-acid chain; its full sequence is Agmatinase (306 aa).

6 residues coordinate Mn(2+): His-126, Asp-149, His-151, Asp-153, Asp-230, and Asp-232.

It belongs to the arginase family. Agmatinase subfamily. It depends on Mn(2+) as a cofactor.

The enzyme catalyses agmatine + H2O = urea + putrescine. The protein operates within amine and polyamine biosynthesis; putrescine biosynthesis via agmatine pathway; putrescine from agmatine: step 1/1. Catalyzes the formation of putrescine from agmatine. The protein is Agmatinase of Salmonella agona (strain SL483).